The following is a 444-amino-acid chain: MSKTYHFIGIKGSGMSALALMLHQMGHKVQGSDVEKYYFTQRGLEQAGITILPFDEKNLDGDMEIIAGNAFRPDNNVEIAYADQNGISYKRYHEFLGSFMRDFVSMGVAGAHGKTSTTGMLSHVLSHITDTSFLIGDGTGRGSANAKYFVFESDEYERHFMPYHPEYSIITNIDFDHPDYFTSLEDVFNAFNDYAKQITKGLFVYGEDAELRKITSDAPIYYYGFEAEGNDFVASDLLRSTTGSTFTVHFRGQNLGQFHIPTFGRHNIMNATAVIGLLYTAGFDLNLVREHLKTFAGVKRRFTEKIVNDTVIIDDFAHHPTEIIATLDAARQKYPSKEIVAVFQPHTFTRTIALLDDFAHALNQADAVYLAQIYGSAREVDHGDVKVEDLANKINKKHQVITVENVSPLLDHDNAVYVFMGAGDIQTYEYSFERLLSNLTSNVQ.

110 to 116 lines the ATP pocket; that stretch reads GAHGKTS.

This sequence belongs to the MurCDEF family.

The protein localises to the cytoplasm. It catalyses the reaction UDP-N-acetyl-alpha-D-muramate + L-alanine + ATP = UDP-N-acetyl-alpha-D-muramoyl-L-alanine + ADP + phosphate + H(+). Its pathway is cell wall biogenesis; peptidoglycan biosynthesis. Cell wall formation. In Streptococcus pneumoniae (strain CGSP14), this protein is UDP-N-acetylmuramate--L-alanine ligase.